Here is an 877-residue protein sequence, read N- to C-terminus: Leucine--tRNA ligase (877 aa).

Positions proline 43–histidine 53 match the 'HIGH' region motif. The short motif at lysine 628–serine 632 is the 'KMSKS' region element. Lysine 631 is an ATP binding site.

Belongs to the class-I aminoacyl-tRNA synthetase family.

The protein resides in the cytoplasm. It carries out the reaction tRNA(Leu) + L-leucine + ATP = L-leucyl-tRNA(Leu) + AMP + diphosphate. This is Leucine--tRNA ligase from Brucella abortus biovar 1 (strain 9-941).